A 459-amino-acid polypeptide reads, in one-letter code: ATP synthase subunit beta (459 aa).

148–155 contributes to the ATP binding site; that stretch reads GGAGVGKT.

This sequence belongs to the ATPase alpha/beta chains family. As to quaternary structure, F-type ATPases have 2 components, CF(1) - the catalytic core - and CF(0) - the membrane proton channel. CF(1) has five subunits: alpha(3), beta(3), gamma(1), delta(1), epsilon(1). CF(0) has three main subunits: a(1), b(2) and c(9-12). The alpha and beta chains form an alternating ring which encloses part of the gamma chain. CF(1) is attached to CF(0) by a central stalk formed by the gamma and epsilon chains, while a peripheral stalk is formed by the delta and b chains.

It is found in the cell inner membrane. It catalyses the reaction ATP + H2O + 4 H(+)(in) = ADP + phosphate + 5 H(+)(out). In terms of biological role, produces ATP from ADP in the presence of a proton gradient across the membrane. The catalytic sites are hosted primarily by the beta subunits. In Thioalkalivibrio sulfidiphilus (strain HL-EbGR7), this protein is ATP synthase subunit beta.